A 255-amino-acid polypeptide reads, in one-letter code: Ribose-5-phosphate isomerase (255 aa).

This sequence belongs to the ribose 5-phosphate isomerase family.

It localises to the cytoplasm. It carries out the reaction aldehydo-D-ribose 5-phosphate = D-ribulose 5-phosphate. The protein operates within carbohydrate degradation; pentose phosphate pathway; D-ribose 5-phosphate from D-ribulose 5-phosphate (non-oxidative stage): step 1/1. In Eremothecium gossypii (strain ATCC 10895 / CBS 109.51 / FGSC 9923 / NRRL Y-1056) (Yeast), this protein is Ribose-5-phosphate isomerase (RKI1).